The sequence spans 409 residues: DEP domain-containing mTOR-interacting protein (409 aa).

Met1 is subject to N-acetylmethionine. Over residues 1 to 10 the composition is skewed to gly residues; that stretch reads MEEGSSGGSG. Positions 1-23 are disordered; sequence MEEGSSGGSGSSDSNAGGSGGVQ. DEP domains are found at residues 36–119 and 146–219; these read TGEQ…RFRK and PETT…QFRM. The DDEX motif signature appears at 217–235; it reads FRMNFRRRRRLMELLNETS. At Ser235 the chain carries Phosphoserine. Position 241 is a phosphothreonine (Thr241). Residues Ser244 and Ser258 each carry the phosphoserine modification. Thr259 carries the phosphothreonine modification. Phosphoserine occurs at positions 263, 265, 280, 282, 283, 286, and 287. A BetaTrCP degron motif motif is present at residues 286-291; that stretch reads SSGYFS. Tyr289 is subject to Phosphotyrosine. Residues Ser291 and Ser293 each carry the phosphoserine modification. Position 295 is a phosphothreonine (Thr295). Phosphoserine is present on residues Ser297, Ser298, and Ser299. Positions 330–407 constitute a PDZ domain; that stretch reads TFTIVGDAVG…TIVMEVMEEL (78 aa).

Associated component of the mechanistic target of rapamycin complex 1 (mTORC1) which contains MTOR, MLST8 and RPTOR. Associated component of the mechanistic target of rapamycin complex 2 (mTORC2) which contains MTOR, MLST8, PROTOR1, RICTOR, MAPKAP1 and DEPTOR. Interacts (via PDZ domain) with MTOR; interacts with MTOR within both mTORC1 and mTORC2. Interacts (via PDZ domain) with MINAR1 (via N-terminus). Interacts with SIK3. Phosphorylation weakens interaction with MTOR within mTORC1 and mTORC2. Phosphorylated at Ser-286, Ser-287 and Ser-291 in response to mitogenic stimulation by MTOR: DEPTOR is either directly phosphorylated by MTOR or indirectly via proteins kinases that are activated by MTOR, such as CK1/CSNK1A1. Phosphorylation at Ser-286, Ser-287 and Ser-291 promotes ubiquitination by the SCF(BTRC) complex, followed by degradation. Phosphorylation at Ser-235 by MAPK3/ERK1 promotes deubiquitination by USP7, enhancing its stability. Phosphorylation at Tyr-291 by SYK impairs its interaction with MTOR, promoting mTORC1 and mTORC2 signaling. In terms of processing, ubiquitinated; leading to proteasomal degradation. Ubiquitination by the SCF(BTRC) and SCF(FBXW11) complexes following phosphorylation at Ser-286, Ser-287 and Ser-291 by MTOR, leads to its degradation by the proteasome. Deubiquitinated by OTUB1 in response to amino acid via a non-canonical mechanism, leading to DEPTOR stability. Deubiquitinated by USP7 following phosphorylation at Ser-235, promoting its stability.

The protein localises to the lysosome membrane. Inhibited upon phosphatidic acid-binding: phosphatidic acid produced upon mitogenic stimulation promotes DEPTOR dissociatiom from the mTORC1 and mTORC2 complexes, leading to their activation. Specifically binds unsaturated phosphatidic acid, such as 16:0-18:1, 18:0-18:1 and di-18:1. Inhibited when nutrients are present via a feedback loop: phosphorylation by MTOR promotes DEPTOR ubiquitination and degradation. Negative regulator of the mTORC1 and mTORC2 complexes: inhibits the protein kinase activity of MTOR, thereby inactivating both complexes. DEPTOR inhibits mTORC1 and mTORC2 to induce autophagy. In contrast to AKT1S1/PRAS40, only partially inhibits mTORC1 activity. The polypeptide is DEP domain-containing mTOR-interacting protein (Mus musculus (Mouse)).